Consider the following 262-residue polypeptide: G patch domain-containing protein 11 (262 aa).

Basic and acidic residues-rich tracts occupy residues 39–61 (LHKE…ESRE), 114–127 (EEVK…ELQN), and 136–165 (QHLE…DLRK). Disordered stretches follow at residues 39–71 (LHKE…IGSQ) and 88–169 (GLGK…SQRA). Residues 41–62 (KEKDIQNRQKSFKEQEKESREA) adopt a coiled-coil conformation. In terms of domain architecture, G-patch spans 70–116 (SQNKGFALLQKMGYKAGQGLGKEGAGRVEPVPLNIKTDRGGIGMEEV).

Belongs to the GPATCH11 family.

It localises to the chromosome. Its subcellular location is the centromere. The protein localises to the kinetochore. This Danio rerio (Zebrafish) protein is G patch domain-containing protein 11 (gpatch11).